The sequence spans 384 residues: N-acetyldiaminopimelate deacetylase (384 aa).

The active site involves aspartate 74. Glutamate 133 acts as the Proton acceptor in catalysis.

The protein belongs to the peptidase M20A family. N-acetyldiaminopimelate deacetylase subfamily.

The catalysed reaction is N-acetyl-(2S,6S)-2,6-diaminopimelate + H2O = (2S,6S)-2,6-diaminopimelate + acetate. Its pathway is amino-acid biosynthesis; L-lysine biosynthesis via DAP pathway; LL-2,6-diaminopimelate from (S)-tetrahydrodipicolinate (acetylase route): step 3/3. In terms of biological role, catalyzes the conversion of N-acetyl-diaminopimelate to diaminopimelate and acetate. In Lactiplantibacillus plantarum (strain ATCC BAA-793 / NCIMB 8826 / WCFS1) (Lactobacillus plantarum), this protein is N-acetyldiaminopimelate deacetylase.